A 223-amino-acid chain; its full sequence is Zinc-finger homeodomain protein 12 (223 aa).

Polar residues predominate over residues 1-20; the sequence is MSSLSKPNRQFLSPTTNNQD. Residues 1–24 are disordered; sequence MSSLSKPNRQFLSPTTNNQDTGRE. The ZF-HD dimerization-type; degenerate zinc finger occupies 37-88; sequence YNECLKNHAVSLGGHALDGCGEFTPKSTTILTDPPSLRCDACGCHRNFHRRS. The homeobox; atypical DNA-binding region spans 147 to 204; it reads KKHKRTKFTAEQKVKMRGFAERAGWKINGWDEKWVREFCSEVGIERKVLKVWIHNNKY.

Homo- and heterodimer with other ZFHD proteins. Interacts with ZHD11.

The protein localises to the nucleus. Functionally, putative transcription factor. In Arabidopsis thaliana (Mouse-ear cress), this protein is Zinc-finger homeodomain protein 12 (ZHD12).